The following is a 537-amino-acid chain: Multidrug resistance protein Stp (537 aa).

Transmembrane regions (helical) follow at residues 6-26, 46-66, 77-97, 104-124, 136-156, 163-183, 200-220, 223-243, 262-282, 300-320, 327-347, 352-372, 397-417, and 478-498; these read LLTL…ALIV, WVVA…ATLA, IGVS…SIAV, AQGL…SAAF, IWTA…GLLV, SIFY…LCYV, LLFI…PQIG, SVQT…FVWL, YALA…MLLL, LMIL…GHLV, VPIL…IFSE, ALVL…LTPI, AIGS…WLSA, and VALL…WRWF.

Belongs to the major facilitator superfamily. EmrB family.

The protein resides in the cell membrane. The chain is Multidrug resistance protein Stp (stp) from Mycobacterium tuberculosis (strain CDC 1551 / Oshkosh).